The chain runs to 933 residues: Protein translocase subunit SecA (933 aa).

Residues Gln-90, 108-112 (GEGKT), and Asp-504 contribute to the ATP site. Residues 539–570 (GMGSNNRRPQGFGQDSKKKKWQPSADIFPTDL) form a disordered region.

This sequence belongs to the SecA family. Monomer and homodimer. Part of the essential Sec protein translocation apparatus which comprises SecA, SecYEG and auxiliary proteins SecDF. Other proteins may also be involved.

The protein resides in the cell inner membrane. Its subcellular location is the cellular thylakoid membrane. The protein localises to the cytoplasm. The enzyme catalyses ATP + H2O + cellular proteinSide 1 = ADP + phosphate + cellular proteinSide 2.. Part of the Sec protein translocase complex. Interacts with the SecYEG preprotein conducting channel. Has a central role in coupling the hydrolysis of ATP to the transfer of proteins into and across the cell membrane, serving as an ATP-driven molecular motor driving the stepwise translocation of polypeptide chains across the membrane. In terms of biological role, probably participates in protein translocation into and across both the cytoplasmic and thylakoid membranes in cyanobacterial cells. This is Protein translocase subunit SecA from Crocosphaera subtropica (strain ATCC 51142 / BH68) (Cyanothece sp. (strain ATCC 51142)).